We begin with the raw amino-acid sequence, 241 residues long: Uridylate kinase (241 aa).

ATP is bound at residue 15–18 (KMSG). Residue Gly-57 participates in UMP binding. Residues Gly-58 and Arg-62 each coordinate ATP. Residues Asp-77 and 138–145 (TGNPFFTT) each bind UMP. ATP contacts are provided by Thr-165, Tyr-171, and Asp-174.

Belongs to the UMP kinase family. As to quaternary structure, homohexamer.

Its subcellular location is the cytoplasm. The enzyme catalyses UMP + ATP = UDP + ADP. Its pathway is pyrimidine metabolism; CTP biosynthesis via de novo pathway; UDP from UMP (UMPK route): step 1/1. With respect to regulation, inhibited by UTP. Its function is as follows. Catalyzes the reversible phosphorylation of UMP to UDP. This Dichelobacter nodosus (strain VCS1703A) protein is Uridylate kinase.